The sequence spans 116 residues: Spexin (116 aa).

Residues 1-26 form the signal peptide; the sequence is MKGLRSLAATTLALFLVFVFLGNSSC. Residues 27 to 35 constitute a propeptide that is removed on maturation; sequence APQRLLERR. Gln49 is modified (glutamine amide). 2 consecutive propeptides follow at residues 50-116 and 74-116; these read GRRF…LLNW and PNPQ…LLNW. The span at 55–73 shows a compositional bias: basic and acidic residues; the sequence is SDQSRRKDLSDRPLPERRS. The disordered stretch occupies residues 55 to 77; that stretch reads SDQSRRKDLSDRPLPERRSPNPQ.

The protein belongs to the spexin family. Expressed in the type I glomic cells within the carotid body (at protein level). Expressed predominantly in pancreas, testis, kidney, brain and placenta. Expressed in submucosal layer of esophagus and stomach fundus.

It is found in the secreted. Its subcellular location is the extracellular space. The protein resides in the cytoplasmic vesicle. The protein localises to the secretory vesicle. In terms of biological role, plays a role as a central modulator of cardiovascular and renal function and nociception. Also plays a role in energy metabolism and storage. Inhibits adrenocortical cell proliferation with minor stimulation on corticosteroid release. Its function is as follows. Acts as a ligand for galanin receptors GALR2 and GALR3. Intracerebroventricular administration of the peptide induces an increase in arterial blood pressure, a decrease in both heart rate and renal excretion and delayed natriuresis. Intraventricular administration of the peptide induces antinociceptive activity. Also induces contraction of muscarinic-like stomach smooth muscles. Intraperitoneal administration of the peptide induces a reduction in food consumption and body weight. Inhibits long chain fatty acid uptake into adipocytes. Functionally, intracerebroventricular administration of the peptide induces a decrease in heart rate, but no change in arterial pressure, and an increase in urine flow rate. Intraventricular administration of the peptide induces antinociceptive activity. In Homo sapiens (Human), this protein is Spexin (SPX).